Reading from the N-terminus, the 452-residue chain is Membrane-bound lytic murein transglycosylase D (452 aa).

A signal peptide spans 1 to 15 (MKAKAILLASVLLVG). The N-palmitoyl cysteine moiety is linked to residue Cys16. Residue Cys16 is the site of S-diacylglycerol cysteine attachment. The segment at 113–198 (NMPMELVLLP…LLTVAAYNSG (86 aa)) is slt-type domain. Residue Glu125 is part of the active site. LysM domains are found at residues 341 to 384 (RVYT…SLTI) and 400 to 448 (ITYR…KNNN).

It belongs to the transglycosylase Slt family.

The protein localises to the cell membrane. The enzyme catalyses Exolytic cleavage of the (1-&gt;4)-beta-glycosidic linkage between N-acetylmuramic acid (MurNAc) and N-acetylglucosamine (GlcNAc) residues in peptidoglycan, from either the reducing or the non-reducing ends of the peptidoglycan chains, with concomitant formation of a 1,6-anhydrobond in the MurNAc residue.. Its function is as follows. Murein-degrading enzyme. May play a role in recycling of muropeptides during cell elongation and/or cell division. This is Membrane-bound lytic murein transglycosylase D (mltD) from Escherichia coli O6:H1 (strain CFT073 / ATCC 700928 / UPEC).